Reading from the N-terminus, the 151-residue chain is FAD synthase (151 aa).

ATP-binding positions include 21–22 (TF), 26–29 (HPGH), and Asp-104.

Belongs to the archaeal FAD synthase family. As to quaternary structure, homodimer. The cofactor is a divalent metal cation.

It carries out the reaction FMN + ATP + H(+) = FAD + diphosphate. The protein operates within cofactor biosynthesis; FAD biosynthesis; FAD from FMN: step 1/1. Its function is as follows. Catalyzes the transfer of the AMP portion of ATP to flavin mononucleotide (FMN) to produce flavin adenine dinucleotide (FAD) coenzyme. The sequence is that of FAD synthase from Methanosarcina mazei (strain ATCC BAA-159 / DSM 3647 / Goe1 / Go1 / JCM 11833 / OCM 88) (Methanosarcina frisia).